We begin with the raw amino-acid sequence, 215 residues long: MDRDTFAARIDHTVLGPETAPGDVEAVLDAAAEYGMNACVPPCYVEAASDYAPDVTLVSVCGFPHGQHATETKATEAETVWQAGADEIDVVINVGRLRGGDTDAVRAEIEQVVAAVPVPVKVIVEAPLLSASELRTACELAADADAAYLKTATGFNGDATVAAVETMAEYLPVKASGGIGSFEAAVEMFDAGADRIGASAGAAIVDGFDPAAFET.

The active-site Proton donor/acceptor is the aspartate 89. Lysine 150 functions as the Schiff-base intermediate with acetaldehyde in the catalytic mechanism. The active-site Proton donor/acceptor is lysine 174.

It belongs to the DeoC/FbaB aldolase family. DeoC type 1 subfamily.

The protein resides in the cytoplasm. It catalyses the reaction 2-deoxy-D-ribose 5-phosphate = D-glyceraldehyde 3-phosphate + acetaldehyde. The protein operates within carbohydrate degradation; 2-deoxy-D-ribose 1-phosphate degradation; D-glyceraldehyde 3-phosphate and acetaldehyde from 2-deoxy-alpha-D-ribose 1-phosphate: step 2/2. Functionally, catalyzes a reversible aldol reaction between acetaldehyde and D-glyceraldehyde 3-phosphate to generate 2-deoxy-D-ribose 5-phosphate. In Natronomonas pharaonis (strain ATCC 35678 / DSM 2160 / CIP 103997 / JCM 8858 / NBRC 14720 / NCIMB 2260 / Gabara) (Halobacterium pharaonis), this protein is Deoxyribose-phosphate aldolase.